A 128-amino-acid chain; its full sequence is uncharacterized protein (128 aa).

To M.jannaschii MJ0766.

This is an uncharacterized protein from Methanocaldococcus jannaschii (strain ATCC 43067 / DSM 2661 / JAL-1 / JCM 10045 / NBRC 100440) (Methanococcus jannaschii).